Consider the following 228-residue polypeptide: Ribose-5-phosphate isomerase A (228 aa).

Substrate contacts are provided by residues 31-34 (TGST), 85-88 (DGAD), and 97-100 (KGGG). Glu-106 functions as the Proton acceptor in the catalytic mechanism. Lys-124 contacts substrate.

This sequence belongs to the ribose 5-phosphate isomerase family. In terms of assembly, homodimer.

It catalyses the reaction aldehydo-D-ribose 5-phosphate = D-ribulose 5-phosphate. Its pathway is carbohydrate degradation; pentose phosphate pathway; D-ribose 5-phosphate from D-ribulose 5-phosphate (non-oxidative stage): step 1/1. Its function is as follows. Catalyzes the reversible conversion of ribose-5-phosphate to ribulose 5-phosphate. This is Ribose-5-phosphate isomerase A from Haloarcula marismortui (strain ATCC 43049 / DSM 3752 / JCM 8966 / VKM B-1809) (Halobacterium marismortui).